The chain runs to 167 residues: 2-C-methyl-D-erythritol 2,4-cyclodiphosphate synthase (167 aa).

A divalent metal cation-binding residues include Asp9 and His11. 4-CDP-2-C-methyl-D-erythritol 2-phosphate contacts are provided by residues Asp9–His11 and His35–Ser36. His43 contributes to the a divalent metal cation binding site. 4-CDP-2-C-methyl-D-erythritol 2-phosphate-binding positions include Asp57–Gly59, Phe62–Asp66, Thr133–Glu136, Phe140, and Arg143.

Belongs to the IspF family. In terms of assembly, homotrimer. A divalent metal cation serves as cofactor.

It carries out the reaction 4-CDP-2-C-methyl-D-erythritol 2-phosphate = 2-C-methyl-D-erythritol 2,4-cyclic diphosphate + CMP. The protein operates within isoprenoid biosynthesis; isopentenyl diphosphate biosynthesis via DXP pathway; isopentenyl diphosphate from 1-deoxy-D-xylulose 5-phosphate: step 4/6. Functionally, involved in the biosynthesis of isopentenyl diphosphate (IPP) and dimethylallyl diphosphate (DMAPP), two major building blocks of isoprenoid compounds. Catalyzes the conversion of 4-diphosphocytidyl-2-C-methyl-D-erythritol 2-phosphate (CDP-ME2P) to 2-C-methyl-D-erythritol 2,4-cyclodiphosphate (ME-CPP) with a corresponding release of cytidine 5-monophosphate (CMP). The protein is 2-C-methyl-D-erythritol 2,4-cyclodiphosphate synthase of Glaesserella parasuis serovar 5 (strain SH0165) (Haemophilus parasuis).